Here is a 195-residue protein sequence, read N- to C-terminus: Ribonuclease HII (195 aa).

Residues 6–195 (SLIAGVDEVG…KSFISRLKKN (190 aa)) form the RNase H type-2 domain. Asp-12, Glu-13, and Asp-108 together coordinate a divalent metal cation.

It belongs to the RNase HII family. Requires Mn(2+) as cofactor. Mg(2+) serves as cofactor.

The protein localises to the cytoplasm. It carries out the reaction Endonucleolytic cleavage to 5'-phosphomonoester.. In terms of biological role, endonuclease that specifically degrades the RNA of RNA-DNA hybrids. The chain is Ribonuclease HII from Prochlorococcus marinus (strain NATL2A).